A 233-amino-acid polypeptide reads, in one-letter code: Lipid A 4'-phosphatase (233 aa).

Position 1 (methionine 1) is a topological domain, cytoplasmic. A helical membrane pass occupies residues 2-22 (LLFWMWWALLAVFRAFPGIDI). The Extracellular segment spans residues 23-60 (YFSQLFFVGADCDATAAAGNICGGFPYRDVAAFDLLRT). Residues 61–81 (VFFRLPYVVAIVMVWKLVECY) form a helical membrane-spanning segment. Over 82-94 (QQHGATFNAERAQ) the chain is Cytoplasmic. A helical membrane pass occupies residues 95-115 (KLKVALGTLLIGPVLLVNVVL). Residues 116 to 149 (KEHWGRPRPIQTDIFGGALHFAEAGSLAGKCVSN) are Extracellular-facing. The chain crosses the membrane as a helical span at residues 150–170 (CSFVSGEAASAGWLFCLLLFV). Residues 171-176 (PKSLRY) are Cytoplasmic-facing. Residues 177 to 197 (AVAAPLAAISILTPAMRLSFG) form a helical membrane-spanning segment. At 198-200 (AHY) the chain is on the extracellular side. The chain crosses the membrane as a helical span at residues 201 to 221 (LSDVVLGWLSSLVVFAALLAL). At 222 to 233 (TESQQHQKNSEI) the chain is on the cytoplasmic side.

Belongs to the lipid A LpxF 4'-phosphatase family.

Its subcellular location is the cell inner membrane. It participates in bacterial outer membrane biogenesis; LPS lipid A biosynthesis. In terms of biological role, removes the 4'-phosphate moiety from lipid IV(A) (a tetraacylated precursor of lipid A). This Rhizobium leguminosarum protein is Lipid A 4'-phosphatase.